We begin with the raw amino-acid sequence, 1156 residues long: MSFSDDGWGAEAEVKVAEDVPEKNVPPPVEPPRAPQSTAIKTEPERNSDEPSAGFGIDPITTSKTFGSQTTPKTEFGGAPSLSGFGGNAAAAAANKTSFDQQGNGFGGAAKHGFGGVGGAPSSFGANVIPVNKPSLGHKTTGFGGEPKHVSGGAFSSANNFDQQDKGFGGAASSGFGNGSMLTNQKVGLENQTTGVGASEVPTSKPSSFGQQPAVVSGFGGAAKMGFGGSSSSGFGGQKAGATESSGFPTKETSTSQPGFGGDSSTGFGSGLKAGFGGHGAGAAENSGLPTETTGFGGKLPSAGFGASSSNESAFGQQSKGFGGATKNGFGGDSSSSFGSGSKAGFGGTSSSGIGGQKPGATESSGFPTKETSTSGGTFGSGFGGKPTSTGFGAPSTTDSSSGQQTAGFGGASKPGFGGDSSTGFGSGLKAGFGGHRASTAENSGLPTETTGFGGKLPPAGFGASSSNESAFGQQSKGFGGATKNGFGGDSSNSFGKRDSGFGGPQDQGFGDTDAPSKSGLGSFNTGGGAVKSAFGAAGFGSSSNFGNGNTFGEPSDNQRGNWDGGERPRGCHNCGEEGHISKECDKPKVPRFPCRNCEQLGHFASDCDQPRVPRGPCRNCGIEGHFAVDCDQPKVPRGPCRNCGQEGHFAKDCQNERVRMEPTEPCRRCAEEGHWGYECPTRPKDLQGNFLESYDFVFTPDDKMFEDAVNNDDKIDFDQKVVASTGKVEIPDMASFDGFKILPQDLHDNLKRMKMNRPTPIQRASFFPIMHGNDVVACAHTGSGKTLAFLIPFVIKLMEEFEKDRDVTDEKPSPRLLIVAPTRELVNQTFTTARQLTYETGLKCGLAFGGYSRNANVQHLRSFSQLNILVATMGRLQDFVNAGEVSLSKMKYIVLDEADRMVDSNDFGEEVSKIIGSPGERTQQTVLFSASFSEDLQSDDLPKFVKEGYTMLQVDKFGTANEKIDQKILPVPRTEKRDAIYKLLGIDENTVTLLPDAPIEKQKTLIFVNSVKFCDTLAALISSAGVSTISMHSYQNQEQRDRTLDDFRRGKYQCMVASNVCARGLNIAGLDHVVNYDMPDKNGFDEYVNRIGRTGRAGFTGTSTAFVDVENDTDIIPCLVSILNEAKKEVPEWLTEGAGHQEEGGDDWNEQEQEW.

4 disordered regions span residues 1 to 81 (MSFS…GAPS), 194 to 213 (TGVG…GQQP), 231 to 423 (SSSG…DSST), and 436 to 522 (HRAS…SGLG). A compositionally biased stretch (basic and acidic residues) spans 12-22 (AEVKVAEDVPE). The span at 24–34 (NVPPPVEPPRA) shows a compositional bias: pro residues. 3 stretches are compositionally biased toward polar residues: residues 60–73 (ITTS…TTPK), 194–211 (TGVG…SFGQ), and 243–258 (TESS…TSQP). Residues 259-281 (GFGGDSSTGFGSGLKAGFGGHGA) are compositionally biased toward gly residues. Over residues 307 to 319 (ASSSNESAFGQQS) the composition is skewed to polar residues. Gly residues-rich tracts occupy residues 321–332 (GFGGATKNGFGG) and 342–358 (SKAG…GGQK). Polar residues-rich tracts occupy residues 362–371 (TESSGFPTKE) and 395–406 (PSTTDSSSGQQT). Over residues 408–423 (GFGGASKPGFGGDSST) the composition is skewed to gly residues. Polar residues-rich tracts occupy residues 440 to 451 (TAENSGLPTETT) and 464 to 476 (ASSS…GQQS). A compositionally biased stretch (gly residues) spans 478 to 489 (GFGGATKNGFGG). 5 CCHC-type zinc fingers span residues 570–587 (RGCH…ECDK), 593–610 (FPCR…DCDQ), 616–633 (GPCR…DCDQ), 639–656 (GPCR…DCQN), and 665–682 (EPCR…ECPT). The Q motif signature appears at 736 to 764 (SFDGFKILPQDLHDNLKRMKMNRPTPIQR). Residues 767–951 (FFPIMHGNDV…LPKFVKEGYT (185 aa)) enclose the Helicase ATP-binding domain. Residue 780 to 787 (AHTGSGKT) participates in ATP binding. The short motif at 897-900 (DEAD) is the DEAD box element. The Helicase C-terminal domain occupies 986–1139 (GIDENTVTLL…EVPEWLTEGA (154 aa)). The segment at 1135–1156 (LTEGAGHQEEGGDDWNEQEQEW) is disordered. The segment covering 1145–1156 (GGDDWNEQEQEW) has biased composition (acidic residues).

This sequence belongs to the DEAD box helicase family. DDX4/VASA subfamily. Interacts (via C-terminus) with kgb-1.

It catalyses the reaction ATP + H2O = ADP + phosphate + H(+). Probable ATP-binding RNA helicase. May act redundantly with the P-granule component glh-1 to regulate the formation of the granular structure of P-granules in embryos. May protect somatic cells from excessive apoptosis during normal development. The polypeptide is ATP-dependent RNA helicase glh-4 (Caenorhabditis elegans).